The sequence spans 239 residues: MKSIPGDIPQYLLIKAQLQARIQSGALKSGDKLPSERELCAIFNTTRITIRESLAQLESSGLIWRADRRGWFVTPERLWLDPTQNTNFHKLCREQGREPKTALLSGVLTTVPVEVMEPLQLQPFDQIYLLTRLRYADGRAVCYCENHCLPARVPELLQYDLNGSLTEVYESHYNLVYTSMHLSFYPTAMPAQAAQALGVMEGRPALLLRRLNYDQHGRVLDLDIEYWRHDSLRIEVDTH.

Residues 8–76 enclose the HTH gntR-type domain; the sequence is IPQYLLIKAQ…DRRGWFVTPE (69 aa). The segment at residues 36 to 55 is a DNA-binding region (H-T-H motif); that stretch reads ERELCAIFNTTRITIRESLA.

In Salmonella typhi, this protein is Putative transcriptional regulator of 2-aminoethylphosphonate degradation operons (phnR).